Here is a 370-residue protein sequence, read N- to C-terminus: DNA replication and repair protein RecF (370 aa).

30–37 (GENAQGKT) serves as a coordination point for ATP.

This sequence belongs to the RecF family.

The protein localises to the cytoplasm. The RecF protein is involved in DNA metabolism; it is required for DNA replication and normal SOS inducibility. RecF binds preferentially to single-stranded, linear DNA. It also seems to bind ATP. This is DNA replication and repair protein RecF from Listeria welshimeri serovar 6b (strain ATCC 35897 / DSM 20650 / CCUG 15529 / CIP 8149 / NCTC 11857 / SLCC 5334 / V8).